We begin with the raw amino-acid sequence, 222 residues long: Large ribosomal subunit protein uL3 (222 aa).

Residues 129-150 (HNFRGLPDSHGTERKHRSPGSI) form a disordered region.

The protein belongs to the universal ribosomal protein uL3 family. In terms of assembly, part of the 50S ribosomal subunit. Forms a cluster with proteins L14 and L19.

One of the primary rRNA binding proteins, it binds directly near the 3'-end of the 23S rRNA, where it nucleates assembly of the 50S subunit. In Acidothermus cellulolyticus (strain ATCC 43068 / DSM 8971 / 11B), this protein is Large ribosomal subunit protein uL3.